Reading from the N-terminus, the 180-residue chain is Crossover junction endodeoxyribonuclease RuvC (180 aa).

Catalysis depends on residues Asp-13, Glu-73, and Asp-145. The Mg(2+) site is built by Asp-13, Glu-73, and Asp-145.

This sequence belongs to the RuvC family. Homodimer which binds Holliday junction (HJ) DNA. The HJ becomes 2-fold symmetrical on binding to RuvC with unstacked arms; it has a different conformation from HJ DNA in complex with RuvA. In the full resolvosome a probable DNA-RuvA(4)-RuvB(12)-RuvC(2) complex forms which resolves the HJ. The cofactor is Mg(2+).

Its subcellular location is the cytoplasm. It catalyses the reaction Endonucleolytic cleavage at a junction such as a reciprocal single-stranded crossover between two homologous DNA duplexes (Holliday junction).. Functionally, the RuvA-RuvB-RuvC complex processes Holliday junction (HJ) DNA during genetic recombination and DNA repair. Endonuclease that resolves HJ intermediates. Cleaves cruciform DNA by making single-stranded nicks across the HJ at symmetrical positions within the homologous arms, yielding a 5'-phosphate and a 3'-hydroxyl group; requires a central core of homology in the junction. The consensus cleavage sequence is 5'-(A/T)TT(C/G)-3'. Cleavage occurs on the 3'-side of the TT dinucleotide at the point of strand exchange. HJ branch migration catalyzed by RuvA-RuvB allows RuvC to scan DNA until it finds its consensus sequence, where it cleaves and resolves the cruciform DNA. This Magnetococcus marinus (strain ATCC BAA-1437 / JCM 17883 / MC-1) protein is Crossover junction endodeoxyribonuclease RuvC.